The chain runs to 296 residues: Ribosomal protein L11 methyltransferase (296 aa).

T139, G163, D185, and N232 together coordinate S-adenosyl-L-methionine.

Belongs to the methyltransferase superfamily. PrmA family.

Its subcellular location is the cytoplasm. It catalyses the reaction L-lysyl-[protein] + 3 S-adenosyl-L-methionine = N(6),N(6),N(6)-trimethyl-L-lysyl-[protein] + 3 S-adenosyl-L-homocysteine + 3 H(+). Methylates ribosomal protein L11. This Picosynechococcus sp. (strain ATCC 27264 / PCC 7002 / PR-6) (Agmenellum quadruplicatum) protein is Ribosomal protein L11 methyltransferase.